Consider the following 353-residue polypeptide: B1 bradykinin receptor (353 aa).

Topologically, residues 1-40 (MASSWPPLELQSSNQSQLFPQNATACDNAPEAWDLLHRVL) are extracellular. Residues Asn14 and Asn22 are each glycosylated (N-linked (GlcNAc...) asparagine). The helical transmembrane segment at 41–64 (PTFIISICFFGLLGNLFVLLVFLL) threads the bilayer. Residues 65 to 73 (PRRQLNVAE) are Cytoplasmic-facing. Residues 74-98 (IYLANLAASDLVFVLGLPFWAENIW) traverse the membrane as a helical segment. Residues 99-111 (NQFNWPFGALLCR) are Extracellular-facing. The cysteines at positions 110 and 189 are disulfide-linked. Residues 112–133 (VINGVIKANLFISIFLVVAISQ) traverse the membrane as a helical segment. Topologically, residues 134-155 (DRYRVLVHPMASRRQQRRRQAR) are cytoplasmic. The helical transmembrane segment at 156–178 (VTCVLIWVVGGLLSIPTFLLRSI) threads the bilayer. At 179 to 199 (QAVPDLNITACILLLPHEAWH) the chain is on the extracellular side. Asn185 is a glycosylation site (N-linked (GlcNAc...) asparagine). The helical transmembrane segment at 200 to 226 (FARIVELNILGFLLPLAAIVFFNYHIL) threads the bilayer. At 227–247 (ASLRTREEVSRTRCGGRKDSK) the chain is on the cytoplasmic side. A helical membrane pass occupies residues 248 to 272 (TTALILTLVVAFLVCWAPYHFFAFL). Residues 273–291 (EFLFQVQAVRGCFWEDFID) are Extracellular-facing. Residues 292–314 (LGLQLANFFAFTNSSLNPVIYVF) traverse the membrane as a helical segment. Over 315–353 (VGRLFRTKVWELYKQCTPKSLAPISSSHRKEIFQLFWRN) the chain is Cytoplasmic. Residue Cys330 is the site of S-palmitoyl cysteine attachment.

The protein belongs to the G-protein coupled receptor 1 family. Bradykinin receptor subfamily. BDKRB1 sub-subfamily.

It is found in the cell membrane. Functionally, this is a receptor for bradykinin. Could be a factor in chronic pain and inflammation. The protein is B1 bradykinin receptor (BDKRB1) of Homo sapiens (Human).